The primary structure comprises 333 residues: Glyceraldehyde-3-phosphate dehydrogenase (333 aa).

Residues 12-13, aspartate 36, arginine 80, and serine 120 each bind NAD(+); that span reads RI. Residues 150–152, threonine 181, arginine 196, 209–210, and arginine 232 each bind D-glyceraldehyde 3-phosphate; these read SCT and TG. Cysteine 151 (nucleophile) is an active-site residue. Asparagine 314 contributes to the NAD(+) binding site.

It belongs to the glyceraldehyde-3-phosphate dehydrogenase family. As to quaternary structure, homotetramer.

Its subcellular location is the cytoplasm. It carries out the reaction D-glyceraldehyde 3-phosphate + phosphate + NAD(+) = (2R)-3-phospho-glyceroyl phosphate + NADH + H(+). It participates in carbohydrate degradation; glycolysis; pyruvate from D-glyceraldehyde 3-phosphate: step 1/5. In terms of biological role, catalyzes the oxidative phosphorylation of glyceraldehyde 3-phosphate (G3P) to 1,3-bisphosphoglycerate (BPG) using the cofactor NAD. The first reaction step involves the formation of a hemiacetal intermediate between G3P and a cysteine residue, and this hemiacetal intermediate is then oxidized to a thioester, with concomitant reduction of NAD to NADH. The reduced NADH is then exchanged with the second NAD, and the thioester is attacked by a nucleophilic inorganic phosphate to produce BPG. The polypeptide is Glyceraldehyde-3-phosphate dehydrogenase (gapB) (Cereibacter sphaeroides (Rhodobacter sphaeroides)).